The chain runs to 1641 residues: Alpha-2-macroglobulin (1641 aa).

Residues 1–31 (MRDRVAMMLRPLVRGWIPRAVLLLTVAFSFG) form the signal peptide. Cysteine 32 is lipidated: N-palmitoyl cysteine. Cysteine 32 carries S-diacylglycerol cysteine lipidation. Positions 1166 to 1169 (CAEQ) form a cross-link, isoglutamyl cysteine thioester (Cys-Gln).

This sequence belongs to the protease inhibitor I39 (alpha-2-macroglobulin) family. Bacterial alpha-2-macroglobulin subfamily.

It is found in the cell membrane. Its function is as follows. Protects the bacterial cell from host peptidases. This Xylella fastidiosa (strain 9a5c) protein is Alpha-2-macroglobulin.